Consider the following 137-residue polypeptide: Small ribosomal subunit protein uS12 (137 aa).

The segment at Met-1–Lys-57 is disordered. Over residues Lys-32 to Pro-41 the composition is skewed to polar residues. Asp-102 is modified (3-methylthioaspartic acid).

Belongs to the universal ribosomal protein uS12 family. Part of the 30S ribosomal subunit. Contacts proteins S8 and S17. May interact with IF1 in the 30S initiation complex.

Functionally, with S4 and S5 plays an important role in translational accuracy. Its function is as follows. Interacts with and stabilizes bases of the 16S rRNA that are involved in tRNA selection in the A site and with the mRNA backbone. Located at the interface of the 30S and 50S subunits, it traverses the body of the 30S subunit contacting proteins on the other side and probably holding the rRNA structure together. The combined cluster of proteins S8, S12 and S17 appears to hold together the shoulder and platform of the 30S subunit. The chain is Small ribosomal subunit protein uS12 from Ligilactobacillus salivarius (strain UCC118) (Lactobacillus salivarius).